A 495-amino-acid polypeptide reads, in one-letter code: Averantin hydroxylase (495 aa).

A helical transmembrane segment spans residues 12 to 32 (ILLLIVLTVLTPPSLALYRLW). Residues N258 and N289 are each glycosylated (N-linked (GlcNAc...) asparagine). C436 provides a ligand contact to heme.

This sequence belongs to the cytochrome P450 family. Heme serves as cofactor.

The protein localises to the membrane. It carries out the reaction (1'S)-averantin + reduced [NADPH--hemoprotein reductase] + O2 = (1'S,5'R)-5'-hydroxyaverantin + oxidized [NADPH--hemoprotein reductase] + H2O. The enzyme catalyses (1'S)-averantin + reduced [NADPH--hemoprotein reductase] + O2 = (1'S,5'S)-5'-hydroxyaverantin + oxidized [NADPH--hemoprotein reductase] + H2O + H(+). It participates in mycotoxin biosynthesis; aflatoxin biosynthesis. Averantin hydroxylase; part of the gene cluster that mediates the biosynthesis of aflatoxins, a group of polyketide-derived furanocoumarins, and part of the most toxic and carcinogenic compounds among the known mycotoxins. The four major aflatoxins produced by A.parasiticus are aflatoxin B1 (AFB1), aflatoxin B2 (AFB2), aflatoxin G1 (AFG1) and aflatoxin G2 (AFG2). Within the aflatoxin pathway, the cytochrome P450 monooxygenase aflG catalyzes the hydroxylation of AVN to 5'hydroxyaverantin (HAVN). The biosynthesis of aflatoxins begins with the norsolorinic acid synthase aflC that combines a hexanoyl starter unit produced by the fatty acid synthase aflA/aflB and 7 malonyl-CoA extender units to synthesize the precursor NOR. The second step is the conversion of NOR to averantin and requires the norsolorinic acid ketoreductase aflD, which catalyzes the dehydration of norsolorinic acid to form (1'S)-averantin. The norsolorinic acid reductases aflE and aflF may also play a role in the conversion of NOR to AVN. The cytochrome P450 monooxygenase aflG then catalyzes the hydroxylation of AVN to 5'hydroxyaverantin (HAVN). The next step is performed by the 5'-hydroxyaverantin dehydrogenase aflH that transforms HAVN to 5'-oxoaverantin (OAVN) which is further converted to averufin (AVF) by aflK that plays a dual role in the pathway, as a 5'-oxoaverantin cyclase that mediates conversion of 5'-oxoaverantin, as well as a versicolorin B synthase in a later step in the pathway. The averufin oxidase aflI catalyzes the conversion of AVF to versiconal hemiacetal acetate (VHA). VHA is then the substrate for the versiconal hemiacetal acetate esterase aflJ to yield versiconal (VAL). Versicolorin B synthase aflK then converts VAL to versicolorin B (VERB) by closing the bisfuran ring of aflatoxin which is required for DNA-binding, thus giving to aflatoxin its activity as a mutagen. Then, the activity of the versicolorin B desaturase aflL leads to versicolorin A (VERA). A branch point starts from VERB since it can also be converted to dihydrodemethylsterigmatocystin (DMDHST), probably also by aflL, VERA being a precursor for aflatoxins B1 and G1, and DMDHST for aflatoxins B2 and G2. Next, the versicolorin reductase aflM and the cytochrome P450 monooxygenase aflN are involved in conversion of VERA to demethylsterigmatocystin (DMST). AflX and aflY seem also involved in this step, through probable aflX-mediated epoxide ring-opening step following versicolorin A oxidation and aflY-mediated Baeyer-Villiger oxidation required for the formation of the xanthone ring. The methyltransferase aflO then leads to the modification of DMST to sterigmatocystin (ST), and of DMDHST to dihydrosterigmatocystin (DHST). Both ST and DHST are then substrates of the O-methyltransferase aflP to yield O-methylsterigmatocystin (OMST) and dihydro-O-methylsterigmatocystin (DHOMST), respectively. Finally OMST is converted to aflatoxins B1 and G1, and DHOMST to aflatoxins B2 and G2, via the action of several enzymes including O-methylsterigmatocystin oxidoreductase aflQ, the cytochrome P450 monooxygenase aflU, but also the NADH-dependent flavin oxidoreductase nadA which is specifically required for the synthesis of AFG1. This chain is Averantin hydroxylase, found in Aspergillus parasiticus (strain ATCC 56775 / NRRL 5862 / SRRC 143 / SU-1).